The sequence spans 427 residues: Gamma-glutamyl phosphate reductase (427 aa).

It belongs to the gamma-glutamyl phosphate reductase family.

Its subcellular location is the cytoplasm. The catalysed reaction is L-glutamate 5-semialdehyde + phosphate + NADP(+) = L-glutamyl 5-phosphate + NADPH + H(+). It functions in the pathway amino-acid biosynthesis; L-proline biosynthesis; L-glutamate 5-semialdehyde from L-glutamate: step 2/2. Functionally, catalyzes the NADPH-dependent reduction of L-glutamate 5-phosphate into L-glutamate 5-semialdehyde and phosphate. The product spontaneously undergoes cyclization to form 1-pyrroline-5-carboxylate. This chain is Gamma-glutamyl phosphate reductase, found in Bifidobacterium adolescentis (strain ATCC 15703 / DSM 20083 / NCTC 11814 / E194a).